The primary structure comprises 99 residues: Small ribosomal subunit protein bS20 (99 aa).

The span at 1–20 shows a compositional bias: basic residues; it reads MASAKPKKKNPRLASGRKRV. Residues 1–21 form a disordered region; that stretch reads MASAKPKKKNPRLASGRKRVR.

The protein belongs to the bacterial ribosomal protein bS20 family.

Binds directly to 16S ribosomal RNA. The sequence is that of Small ribosomal subunit protein bS20 from Verminephrobacter eiseniae (strain EF01-2).